The primary structure comprises 351 residues: DNA nickase (351 aa).

Residues His-241, Glu-245, and His-303 each coordinate Fe cation.

Functionally, acts as a DNA nickase. The chain is DNA nickase from Nostoc sp. (strain PCC 7120 / SAG 25.82 / UTEX 2576).